We begin with the raw amino-acid sequence, 432 residues long: Enolase (432 aa).

Residue Gln167 participates in (2R)-2-phosphoglycerate binding. The active-site Proton donor is Glu209. Positions 246, 289, and 316 each coordinate Mg(2+). Residues Lys341, Arg370, Ser371, and Lys392 each contribute to the (2R)-2-phosphoglycerate site. Residue Lys341 is the Proton acceptor of the active site.

Belongs to the enolase family. Requires Mg(2+) as cofactor.

It localises to the cytoplasm. The protein resides in the secreted. Its subcellular location is the cell surface. The enzyme catalyses (2R)-2-phosphoglycerate = phosphoenolpyruvate + H2O. Its pathway is carbohydrate degradation; glycolysis; pyruvate from D-glyceraldehyde 3-phosphate: step 4/5. Its function is as follows. Catalyzes the reversible conversion of 2-phosphoglycerate (2-PG) into phosphoenolpyruvate (PEP). It is essential for the degradation of carbohydrates via glycolysis. The protein is Enolase of Petrotoga mobilis (strain DSM 10674 / SJ95).